The following is a 220-amino-acid chain: ATP-dependent dethiobiotin synthetase BioD (220 aa).

12 to 17 is a binding site for ATP; sequence DVGKTI. Residue Thr-16 participates in Mg(2+) binding. Residue Lys-37 is part of the active site. Substrate is bound at residue Thr-41. ATP-binding positions include Asp-49, 107–110, 167–168, and 197–199; these read EGAG, GS, and PAG. Positions 49 and 107 each coordinate Mg(2+).

Belongs to the dethiobiotin synthetase family. As to quaternary structure, homodimer. It depends on Mg(2+) as a cofactor.

It is found in the cytoplasm. It catalyses the reaction (7R,8S)-7,8-diammoniononanoate + CO2 + ATP = (4R,5S)-dethiobiotin + ADP + phosphate + 3 H(+). Its pathway is cofactor biosynthesis; biotin biosynthesis; biotin from 7,8-diaminononanoate: step 1/2. Functionally, catalyzes a mechanistically unusual reaction, the ATP-dependent insertion of CO2 between the N7 and N8 nitrogen atoms of 7,8-diaminopelargonic acid (DAPA, also called 7,8-diammoniononanoate) to form a ureido ring. This chain is ATP-dependent dethiobiotin synthetase BioD, found in Corynebacterium efficiens (strain DSM 44549 / YS-314 / AJ 12310 / JCM 11189 / NBRC 100395).